Here is a 653-residue protein sequence, read N- to C-terminus: Multidomain regulatory protein Rv1364c (653 aa).

Phosphothreonine; by PknD occurs at positions 54 and 81. Residues 86–142 (SGSEWRLQTDYDGSGVEERYFDFVVTPRRRADGSIEGVQLIVDDVTSRVRARQAAEA) enclose the PAC domain. Residues 177–396 (DIAAEYLVAA…DDVTLLAMQR (220 aa)) enclose the PPM-type phosphatase domain. Residues D211 and V212 each contribute to the Mn(2+) site. T299 carries the post-translational modification Phosphothreonine; by PknD. Mn(2+) contacts are provided by D328 and D387. T390 carries the post-translational modification Phosphothreonine; by PknD. The segment at 397 to 544 (RAPTPPLHIT…TMVRRAAFQQ (148 aa)) is anti-sigma factor kinase region. Phosphoserine; by PknD is present on S506. A phosphothreonine; by PknD mark is found at T520 and T568. The STAS domain maps to 546 to 653 (IDSEFVSLVE…ADTEDIFAQE (108 aa)). Phosphoserine; by autocatalysis is present on S600.

Exists in solution as both monomer and dimer. Both the phosphorylated and unphosphorylated proteins form extended dimers. Interacts with SigF. Can efficiently bind to SigF independently of its autophosphorylation. Interaction between SigF and Rv1364c is reduced significantly upon the phosphorylation of both proteins by PknD. The cofactor is Mn(2+). Mg(2+) is required as a cofactor. In terms of processing, autophosphorylated. Phosphorylated by PknD on multiple threonine and serine residues. Phosphorylation is antagonized by the phosphatase activity.

It catalyses the reaction O-phospho-L-seryl-[protein] + H2O = L-seryl-[protein] + phosphate. The enzyme catalyses O-phospho-L-threonyl-[protein] + H2O = L-threonyl-[protein] + phosphate. The catalysed reaction is L-seryl-[protein] + ATP = O-phospho-L-seryl-[protein] + ADP + H(+). It carries out the reaction L-threonyl-[protein] + ATP = O-phospho-L-threonyl-[protein] + ADP + H(+). With respect to regulation, the phosphatase domain is activated by the anti-sigma factor kinase domain. Its function is as follows. Primarily acts as an independent SigF regulator that is sensitive to the osmosensory signal, mediating the cross talk of PknD with the SigF regulon. Possesses both phosphatase and kinase activities. The kinase domain functions as a classic anti-sigma factor-like kinase to phosphorylate the anti-anti-sigma factor domain at the canonical regulatory site, and the phosphatase domain antagonizes this activity. This Mycobacterium tuberculosis (strain ATCC 25618 / H37Rv) protein is Multidomain regulatory protein Rv1364c.